Reading from the N-terminus, the 315-residue chain is Probable diguanylate cyclase DgcF (315 aa).

A run of 4 helical transmembrane segments spans residues 10–30 (FSTG…GVLP), 41–61 (IALI…SLAF), 80–100 (LLTF…VIDI), and 116–136 (LGIA…AAIN). One can recognise a GGDEF domain in the interval 173 to 310 (QHLTVMLLDI…GRNRTSTMRY (138 aa)). Positions 181 and 182 each coordinate Mg(2+). Residues N189, H194, and D198 each contribute to the substrate site. E224 is a binding site for Mg(2+).

Homodimer. The cofactor is Mg(2+).

It is found in the cell membrane. It carries out the reaction 2 GTP = 3',3'-c-di-GMP + 2 diphosphate. It functions in the pathway purine metabolism; 3',5'-cyclic di-GMP biosynthesis. Functionally, catalyzes the synthesis of cyclic-di-GMP (c-di-GMP) via the condensation of 2 GTP molecules. This chain is Probable diguanylate cyclase DgcF, found in Escherichia coli (strain K12).